Here is a 136-residue protein sequence, read N- to C-terminus: Large ribosomal subunit protein uL16 (136 aa).

The protein belongs to the universal ribosomal protein uL16 family. In terms of assembly, part of the 50S ribosomal subunit.

In terms of biological role, binds 23S rRNA and is also seen to make contacts with the A and possibly P site tRNAs. This is Large ribosomal subunit protein uL16 from Psychromonas ingrahamii (strain DSM 17664 / CCUG 51855 / 37).